Consider the following 491-residue polypeptide: Monocarboxylate transport permease protein (491 aa).

Helical transmembrane passes span 7-27 (GTALAVFIFFFVLVTVMGFVA), 55-75 (WFLVGGDFYTAYTVIAVPALV), 83-103 (FFALPYTIVVYPFVFMVMPVL), 130-150 (LAVAATGVIATMPYIALQLVG), 157-177 (ALGLHGELPLAIAFIVLALYT), 187-207 (LIAFVKDIMIYIVVIAAVALI), 246-266 (LALGSALAAFMYPHTLTGIFA), 277-297 (AIMLPAYTLLLGLLALLGYMG), 322-342 (WFSGFAFAAIAIGALVPAAVM), 374-396 (ITSLVVKVGALLVIIFLPTQFAL), 400-422 (LLGGIWILQTLPALVFGLYTNWF), 427-447 (LLAGWFVGFGGGTFLVWDAGW), and 465-485 (GLLALAANIAVAVVVNALLPA).

This sequence belongs to the sodium:solute symporter (SSF) (TC 2.A.21) family.

Its subcellular location is the cell membrane. Inhibited by CCCP, but is apparently not affected by the concentration of sodium. Its function is as follows. Low-affinity transporter of alanine and high-affinity transporter of lactate and pyruvate. Can also transport other monocarboxylates such as propionate, butyrate, alpha-hydroxybutyrate or acetate. May be proton coupled. Required for optimal growth on alanine or pyruvate and ammonia. The polypeptide is Monocarboxylate transport permease protein (Rhizobium johnstonii (strain DSM 114642 / LMG 32736 / 3841) (Rhizobium leguminosarum bv. viciae)).